Reading from the N-terminus, the 333-residue chain is UDP-N-acetylglucosamine 4,6-dehydratase (inverting) (333 aa).

NADP(+)-binding positions include 19-22 (TGSF), 43-48 (SRDELK), 67-68 (DV), Ala87, Lys91, and 129-130 (LS). Lys91 is a binding site for substrate. Lys133 is an active-site residue. NADP(+)-binding residues include Tyr141 and Lys145. Residue Asn173 participates in substrate binding. 174–178 (VVGSR) is a binding site for NADP(+). Residues Val181, Thr199, Arg258, and Glu261 each coordinate substrate.

Belongs to the polysaccharide synthase family. Homohexamer. It depends on NADP(+) as a cofactor.

It carries out the reaction UDP-N-acetyl-alpha-D-glucosamine = UDP-2-acetamido-2,6-dideoxy-beta-L-arabino-hex-4-ulose + H2O. In terms of biological role, catalyzes the first step in the biosynthesis of pseudaminic acid, a sialic-acid-like sugar that is used to modify flagellin. Has both C6 dehydratase and C5 epimerase activities that result in the production of both UDP-2-acetamido-2,6-dideoxy-beta-L-arabino-4-hexulose and UDP-2-acetamido-2,6-dideoxy-alpha-D-xylo-4-hexulose. This is UDP-N-acetylglucosamine 4,6-dehydratase (inverting) (pseB) from Helicobacter pylori (strain ATCC 700392 / 26695) (Campylobacter pylori).